Consider the following 227-residue polypeptide: Cytochrome c oxidase subunit 2 (227 aa).

Residues 1-14 (MAYTFQLGLQDATS) are Mitochondrial intermembrane-facing. A helical transmembrane segment spans residues 15–45 (PIMEELTNFHDHTLMIVFLISSLVLYVISLM). Residues 46 to 59 (LTTKLTHTNTMDAQ) lie on the Mitochondrial matrix side of the membrane. The chain crosses the membrane as a helical span at residues 60–87 (EVETIWTILPAVILILIALPSLRILYMM). The Mitochondrial intermembrane segment spans residues 88 to 227 (DEINNPVLTV…HFENWSASMI (140 aa)). The Cu cation site is built by H161, C196, E198, C200, H204, and M207. E198 serves as a coordination point for Mg(2+).

It belongs to the cytochrome c oxidase subunit 2 family. Component of the cytochrome c oxidase (complex IV, CIV), a multisubunit enzyme composed of 14 subunits. The complex is composed of a catalytic core of 3 subunits MT-CO1, MT-CO2 and MT-CO3, encoded in the mitochondrial DNA, and 11 supernumerary subunits COX4I, COX5A, COX5B, COX6A, COX6B, COX6C, COX7A, COX7B, COX7C, COX8 and NDUFA4, which are encoded in the nuclear genome. The complex exists as a monomer or a dimer and forms supercomplexes (SCs) in the inner mitochondrial membrane with NADH-ubiquinone oxidoreductase (complex I, CI) and ubiquinol-cytochrome c oxidoreductase (cytochrome b-c1 complex, complex III, CIII), resulting in different assemblies (supercomplex SCI(1)III(2)IV(1) and megacomplex MCI(2)III(2)IV(2)). Found in a complex with TMEM177, COA6, COX18, COX20, SCO1 and SCO2. Interacts with TMEM177 in a COX20-dependent manner. Interacts with COX20. Interacts with COX16. The cofactor is Cu cation.

It localises to the mitochondrion inner membrane. It carries out the reaction 4 Fe(II)-[cytochrome c] + O2 + 8 H(+)(in) = 4 Fe(III)-[cytochrome c] + 2 H2O + 4 H(+)(out). Component of the cytochrome c oxidase, the last enzyme in the mitochondrial electron transport chain which drives oxidative phosphorylation. The respiratory chain contains 3 multisubunit complexes succinate dehydrogenase (complex II, CII), ubiquinol-cytochrome c oxidoreductase (cytochrome b-c1 complex, complex III, CIII) and cytochrome c oxidase (complex IV, CIV), that cooperate to transfer electrons derived from NADH and succinate to molecular oxygen, creating an electrochemical gradient over the inner membrane that drives transmembrane transport and the ATP synthase. Cytochrome c oxidase is the component of the respiratory chain that catalyzes the reduction of oxygen to water. Electrons originating from reduced cytochrome c in the intermembrane space (IMS) are transferred via the dinuclear copper A center (CU(A)) of subunit 2 and heme A of subunit 1 to the active site in subunit 1, a binuclear center (BNC) formed by heme A3 and copper B (CU(B)). The BNC reduces molecular oxygen to 2 water molecules using 4 electrons from cytochrome c in the IMS and 4 protons from the mitochondrial matrix. The protein is Cytochrome c oxidase subunit 2 (MT-CO2) of Niviventer culturatus (Oldfield white-bellied rat).